Here is a 419-residue protein sequence, read N- to C-terminus: MEKEMRNLMLLVLLTVILDNGIGKCNAKSEEDQDGNARNNRIDKNDDNSDSIEKYLREVTDELSKILAKRIYRDIQLRENNKKAENRQSWIGDLENLDIDSTVQRPPGLWGREADFDNTRAHDSAQISDEKQSGLWVGDAKPPGLWGRDAKPPGLWGRDAKPPGLWGRDAKPPGLWGRDAKPPGLWGRDAKPPGLWGRDAKPPGLWGRDAKPPGLWGGDAKPPGLWGRDAKPPGLWGRDAKPPGLWGRDAKPPGLWGRDAKPPGLWGRDAKPPGLWGRDTKPPGLWGRDAKPPGLWGRDAKPPSLWSKDNNVIKSRSDDAKPPGLWGRQVEDGPTKIWGDGFLDAERHIRLLKNDERFNRLEKKADMEEELRVAQGPSVTNAKDTFGELADLLRKRIVKRLHKNDSLNNRRNNKKNNKF.

The signal sequence occupies residues 1–27; it reads MEKEMRNLMLLVLLTVILDNGIGKCNA. Residues 27–48 are disordered; that stretch reads AKSEEDQDGNARNNRIDKNDDN. A propeptide spanning residues 28 to 104 is cleaved from the precursor; the sequence is KSEEDQDGNA…ENLDIDSTVQ (77 aa). Tryptophan 110 bears the Tryptophan amide mark. The propeptide occupies 113-140; it reads EADFDNTRAHDSAQISDEKQSGLWVGDA. The segment covering 120 to 132 has biased composition (basic and acidic residues); sequence RAHDSAQISDEKQ. A disordered region spans residues 120–332; that stretch reads RAHDSAQISD…PGLWGRQVED (213 aa). A Tryptophan amide modification is found at tryptophan 146. Positions 149–150 are excised as a propeptide; that stretch reads DA. Tryptophan 156 is modified (tryptophan amide). A propeptide spanning residues 159–160 is cleaved from the precursor; the sequence is DA. Tryptophan 166 carries the tryptophan amide modification. The propeptide occupies 169 to 170; sequence DA. A Tryptophan amide modification is found at tryptophan 176. The propeptide occupies 179–180; that stretch reads DA. Position 186 is a tryptophan amide (tryptophan 186). The propeptide occupies 189–190; it reads DA. At tryptophan 196 the chain carries Tryptophan amide. Positions 199–200 are excised as a propeptide; the sequence is DA. The residue at position 206 (tryptophan 206) is a Tryptophan amide. A propeptide spanning residues 209-210 is cleaved from the precursor; it reads DA. Position 216 is a tryptophan amide (tryptophan 216). Positions 218–220 are cleaved as a propeptide — seems to have a sequencing error or a mutation in position 218; Gly instead of Arg; it reads GDA. Tryptophan 226 carries the tryptophan amide modification. Positions 229–230 are excised as a propeptide; it reads DA. Tryptophan 236 bears the Tryptophan amide mark. Positions 239 to 240 are excised as a propeptide; it reads DA. Tryptophan amide is present on tryptophan 246. Residues 249–250 constitute a propeptide that is removed on maturation; sequence DA. At tryptophan 256 the chain carries Tryptophan amide. A propeptide spanning residues 259 to 260 is cleaved from the precursor; that stretch reads DA. Tryptophan amide is present on tryptophan 266. A propeptide spanning residues 269 to 270 is cleaved from the precursor; it reads DA. Tryptophan 276 carries the post-translational modification Tryptophan amide. A propeptide spanning residues 279–280 is cleaved from the precursor; that stretch reads DT. Tryptophan 286 carries the post-translational modification Tryptophan amide. Positions 289–290 are excised as a propeptide; sequence DA. Tryptophan amide is present on tryptophan 296. Propeptides lie at residues 299-300 and 309-320; these read DA and DNNVIKSRSDDA. At tryptophan 326 the chain carries Tryptophan amide. A propeptide spanning residues 329-419 is cleaved from the precursor; sequence QVEDGPTKIW…RRNNKKNNKF (91 aa).

It belongs to the LWamide neuropeptide family. As to expression, in planula larvae, expressed in a narrow ring of ectodermal neurosensory cells around the widest circumference at the anterior of the larvae. In primary polyps, expression is confined to endodermal cells of the hypostome. In mature polyps, expression is strong in the epidermis from the tentacle level to the base of the polyp and weak in the gastrodermal cells in the apical hypostome.

It is found in the secreted. LWamide peptides may be involved in induction of metamorphosis. This chain is LWamide neuropeptides, found in Hydractinia echinata (Snail fur).